The primary structure comprises 477 residues: Glycogen synthase (477 aa).

Position 15 (K15) interacts with ADP-alpha-D-glucose.

This sequence belongs to the glycosyltransferase 1 family. Bacterial/plant glycogen synthase subfamily.

It catalyses the reaction [(1-&gt;4)-alpha-D-glucosyl](n) + ADP-alpha-D-glucose = [(1-&gt;4)-alpha-D-glucosyl](n+1) + ADP + H(+). The protein operates within glycan biosynthesis; glycogen biosynthesis. Functionally, synthesizes alpha-1,4-glucan chains using ADP-glucose. The chain is Glycogen synthase from Escherichia coli O139:H28 (strain E24377A / ETEC).